The chain runs to 379 residues: Cytochrome-c peroxidase IdrP1 (379 aa).

The N-terminal stretch at 1–24 (MNNRKPLQLSLLVASLAVAFTASA) is a signal peptide. Cytochrome c domains are found at residues 50-158 (EKIA…DAFK) and 204-355 (TSQK…EALS). Residues Cys72, Cys75, His76, Cys219, Cys222, and His223 each contribute to the heme c site.

In terms of assembly, the iodate reductase (Idr) complex is composed of a molybdopterin-dependent iodate reductase (IdrA and IdrB subunits) and two associated peroxidases (IdrP1 and IdrP2). Heme c serves as cofactor.

It localises to the periplasm. It catalyses the reaction 2 Fe(II)-[cytochrome c] + H2O2 + 2 H(+) = 2 Fe(III)-[cytochrome c] + 2 H2O. Its function is as follows. Involved in iodate respiration. Probably reduces the H(2)O(2) produced by IdrA/IdrB to H(2)O, using a reduced cytochrome c as the electron donor. The sequence is that of Cytochrome-c peroxidase IdrP1 from Pseudomonas sp. (strain SCT).